A 1337-amino-acid polypeptide reads, in one-letter code: DNA mismatch repair protein Msh6 (1337 aa).

The PWWP domain occupies 68–130; it reads PGDLVWAKME…IKYLRPYKGS (63 aa). Residues 170 to 310 form a disordered region; it reads AVCSEPSDTE…SEAPKRAAPV (141 aa). The segment covering 176 to 187 has biased composition (acidic residues); that stretch reads SDTEEAEEEEME. Residues 226–248 show a composition bias toward basic and acidic residues; the sequence is VLDSDSDRDGSDVEFKPDVKEAS. The segment covering 257 to 272 has biased composition (acidic residues); that stretch reads DENEATDVETDEESIE. Residues 279 to 292 show a composition bias toward basic residues; sequence PSKRKRGNVSKPSK. Residues 294–305 are compositionally biased toward basic and acidic residues; it reads SSLENEHSEAPK. An ATP-binding site is contributed by 1111-1118; sequence GPNMGGKS.

Belongs to the DNA mismatch repair MutS family.

It localises to the nucleus. Component of the post-replicative DNA mismatch repair system (MMR). Involved in B cell growth by positively regulating B cell proliferation and controlling replication efficiency. Controls cell cycle to prevent re-replication and defects in DNA damage-induced G2 checkpoint. Doesn't seem to counteract or control the immunoglobulin gene conversion (Ig GC) and to contribute to guanine/uracil mismatch repair. This chain is DNA mismatch repair protein Msh6, found in Gallus gallus (Chicken).